We begin with the raw amino-acid sequence, 158 residues long: Ribosomal RNA large subunit methyltransferase H (158 aa).

S-adenosyl-L-methionine-binding positions include leucine 74, glycine 105, and 124–129 (LGPLTL).

Belongs to the RNA methyltransferase RlmH family. Homodimer.

It localises to the cytoplasm. The catalysed reaction is pseudouridine(1915) in 23S rRNA + S-adenosyl-L-methionine = N(3)-methylpseudouridine(1915) in 23S rRNA + S-adenosyl-L-homocysteine + H(+). Functionally, specifically methylates the pseudouridine at position 1915 (m3Psi1915) in 23S rRNA. The polypeptide is Ribosomal RNA large subunit methyltransferase H (Xylella fastidiosa (strain 9a5c)).